The sequence spans 172 residues: Large ribosomal subunit protein uL10 (172 aa).

It belongs to the universal ribosomal protein uL10 family. In terms of assembly, part of the ribosomal stalk of the 50S ribosomal subunit. The N-terminus interacts with L11 and the large rRNA to form the base of the stalk. The C-terminus forms an elongated spine to which L12 dimers bind in a sequential fashion forming a multimeric L10(L12)X complex.

Functionally, forms part of the ribosomal stalk, playing a central role in the interaction of the ribosome with GTP-bound translation factors. The polypeptide is Large ribosomal subunit protein uL10 (Rhizobium johnstonii (strain DSM 114642 / LMG 32736 / 3841) (Rhizobium leguminosarum bv. viciae)).